A 183-amino-acid polypeptide reads, in one-letter code: Large ribosomal subunit protein uL22 (183 aa).

Residues 163–183 (KTAAKKQSAKKLKKQKMMYRE) form a disordered region. Over residues 165–183 (AAKKQSAKKLKKQKMMYRE) the composition is skewed to basic residues.

Belongs to the universal ribosomal protein uL22 family.

This is Large ribosomal subunit protein uL22 (rpl-17) from Pectinaria gouldii (Trumpet worm).